A 1023-amino-acid chain; its full sequence is 2-oxoglutarate dehydrogenase complex component E1 (1023 aa).

Residues 1-40 constitute a mitochondrion transit peptide; it reads MFHLRTCAAKLRPLTASQTVKTFSQNKPAAIRTFQQIRCY. The residue at position 74 (lysine 74) is an N6-succinyllysine. Serine 100 carries the post-translational modification Phosphoserine. Ca(2+)-binding residues include histidine 143, aspartate 156, and aspartate 158. Arginine 312 contacts thiamine diphosphate. At lysine 401 the chain carries N6-acetyllysine. Residues aspartate 411, asparagine 444, and isoleucine 446 each coordinate thiamine diphosphate. Residues aspartate 411, asparagine 444, and isoleucine 446 each coordinate Mg(2+). A Glycyl lysine isopeptide (Lys-Gly) (interchain with G-Cter in ubiquitin) cross-link involves residue lysine 534. Position 564 is an N6-succinyllysine (lysine 564). Glutamine 676 contacts thiamine diphosphate. Positions 933-939 are recognized by alloreactive CD8 cytotoxic T-lymphocytes in association with a class I MHC protein; sequence LSPFPFD. Lysine 970 is modified (N6-acetyllysine).

This sequence belongs to the alpha-ketoglutarate dehydrogenase family. Homodimer. The 2-oxoglutarate dehydrogenase complex is composed of OGDH (2-oxoglutarate dehydrogenase; E1), DLST (dihydrolipoamide succinyltransferase; E2), DLD (dihydrolipoamide dehydrogenase; E3) and the assembly factor KGD4. It contains multiple copies of the three enzymatic components (E1, E2 and E3). In the nucleus, the 2-oxoglutarate dehydrogenase complex associates with KAT2A. Interacts with ABHD11; this interaction maintains the functional lipoylation of the 2-oxoglutarate dehydrogenase complex. Thiamine diphosphate serves as cofactor. Requires Mg(2+) as cofactor.

It is found in the mitochondrion. The protein localises to the nucleus. The catalysed reaction is N(6)-[(R)-lipoyl]-L-lysyl-[protein] + 2-oxoglutarate + H(+) = N(6)-[(R)-S(8)-succinyldihydrolipoyl]-L-lysyl-[protein] + CO2. Its activity is regulated as follows. Calcium ions and ADP stimulate, whereas ATP and NADH reduce catalytic activity. Functionally, 2-oxoglutarate dehydrogenase (E1o) component of the 2-oxoglutarate dehydrogenase complex (OGDHC). Participates in the first step, rate limiting for the overall conversion of 2-oxoglutarate to succinyl-CoA and CO(2) catalyzed by the whole OGDHC. Catalyzes the irreversible decarboxylation of 2-oxoglutarate (alpha-ketoglutarate) via the thiamine diphosphate (ThDP) cofactor and subsequent transfer of the decarboxylated acyl intermediate on an oxidized dihydrolipoyl group that is covalently amidated to the E2 enzyme (dihydrolipoyllysine-residue succinyltransferase or DLST). Plays a key role in the Krebs (citric acid) cycle, which is a common pathway for oxidation of fuel molecules, including carbohydrates, fatty acids, and amino acids. Can catalyze the decarboxylation of 2-oxoadipate in vitro, but at a much lower rate than 2-oxoglutarate. Mainly active in the mitochondrion. A fraction of the 2-oxoglutarate dehydrogenase complex also localizes in the nucleus and is required for lysine succinylation of histones: associates with KAT2A on chromatin and provides succinyl-CoA to histone succinyltransferase KAT2A. This chain is 2-oxoglutarate dehydrogenase complex component E1, found in Mus musculus (Mouse).